The chain runs to 118 residues: Secreted effector CSEP0064 (118 aa).

A signal peptide spans 1 to 21 (MRPFQLLSALAIFINLEAVEA). Cysteine 27 and cysteine 113 form a disulfide bridge.

Interacts in planta with the pathogenesis-related protein PR10.

It localises to the secreted. Its subcellular location is the host cell. Functionally, secreted effector that increases susceptibility to infection in both monocotyledonous and dicotyledonous plants. Non-catalytic homolog of fungal RNases that binds host RNA and inhibits the degradation of host ribosomal RNA induced by ribosome-inactivating proteins (RIPs), preventing host cell death, an inviable interaction and demise of the fungus. The chain is Secreted effector CSEP0064 from Blumeria graminis f. sp. hordei (strain DH14) (Barley powdery mildew).